The following is a 209-amino-acid chain: FMN-dependent NADH:quinone oxidoreductase 2 (209 aa).

Residues serine 9, 15–17 (SVS), and 97–100 (MWNF) contribute to the FMN site.

The protein belongs to the azoreductase type 1 family. In terms of assembly, homodimer. FMN serves as cofactor.

The catalysed reaction is 2 a quinone + NADH + H(+) = 2 a 1,4-benzosemiquinone + NAD(+). It carries out the reaction N,N-dimethyl-1,4-phenylenediamine + anthranilate + 2 NAD(+) = 2-(4-dimethylaminophenyl)diazenylbenzoate + 2 NADH + 2 H(+). Functionally, quinone reductase that provides resistance to thiol-specific stress caused by electrophilic quinones. Its function is as follows. Also exhibits azoreductase activity. Catalyzes the reductive cleavage of the azo bond in aromatic azo compounds to the corresponding amines. The protein is FMN-dependent NADH:quinone oxidoreductase 2 of Pseudomonas syringae pv. tomato (strain ATCC BAA-871 / DC3000).